Consider the following 309-residue polypeptide: Ribonuclease Z (309 aa).

H63, H65, D67, H68, H141, D208, and H266 together coordinate Zn(2+). The active-site Proton acceptor is the D67.

This sequence belongs to the RNase Z family. As to quaternary structure, homodimer. The cofactor is Zn(2+).

It catalyses the reaction Endonucleolytic cleavage of RNA, removing extra 3' nucleotides from tRNA precursor, generating 3' termini of tRNAs. A 3'-hydroxy group is left at the tRNA terminus and a 5'-phosphoryl group is left at the trailer molecule.. Zinc phosphodiesterase, which displays some tRNA 3'-processing endonuclease activity. Probably involved in tRNA maturation, by removing a 3'-trailer from precursor tRNA. This Salinispora arenicola (strain CNS-205) protein is Ribonuclease Z.